Reading from the N-terminus, the 393-residue chain is S-adenosylmethionine synthase 1 (393 aa).

Glutamate 9 serves as a coordination point for Mg(2+). Histidine 15 lines the ATP pocket. Glutamate 43 serves as a coordination point for K(+). Residues glutamate 56 and glutamine 99 each contribute to the L-methionine site. Cysteine 114 is modified (S-nitrosocysteine). ATP-binding positions include 167 to 169 (DGK), 235 to 238 (SGRF), aspartate 246, 252 to 253 (RK), alanine 269, lysine 273, and lysine 277. Aspartate 246 lines the L-methionine pocket. Lysine 277 is a binding site for L-methionine.

It belongs to the AdoMet synthase family. In terms of assembly, homotetramer. Interacts with GRF3. Requires Mn(2+) as cofactor. It depends on Mg(2+) as a cofactor. Co(2+) serves as cofactor. The cofactor is K(+). In terms of processing, S-nitrosylated in the presence of NO. The inhibition of SAM1 activity by S-nitrosylation could contribute to the cross-talk between ethylene and NO signaling. Highly expressed in stems and roots.

Its subcellular location is the cytoplasm. It carries out the reaction L-methionine + ATP + H2O = S-adenosyl-L-methionine + phosphate + diphosphate. Its pathway is amino-acid biosynthesis; S-adenosyl-L-methionine biosynthesis; S-adenosyl-L-methionine from L-methionine: step 1/1. With respect to regulation, reversibly inhibited by NO. Inhibited by 5,5'-dithiobis-2-nitrobenzoic acid (DTNB) and N-ethylmaleimide (NEM) (in vitro). Functionally, catalyzes the formation of S-adenosylmethionine from methionine and ATP. The reaction comprises two steps that are both catalyzed by the same enzyme: formation of S-adenosylmethionine (AdoMet) and triphosphate, and subsequent hydrolysis of the triphosphate. The chain is S-adenosylmethionine synthase 1 (SAM1) from Arabidopsis thaliana (Mouse-ear cress).